A 560-amino-acid polypeptide reads, in one-letter code: Formate--tetrahydrofolate ligase (560 aa).

69–76 (TPAGEGKS) lines the ATP pocket.

Belongs to the formate--tetrahydrofolate ligase family.

It carries out the reaction (6S)-5,6,7,8-tetrahydrofolate + formate + ATP = (6R)-10-formyltetrahydrofolate + ADP + phosphate. The protein operates within one-carbon metabolism; tetrahydrofolate interconversion. This chain is Formate--tetrahydrofolate ligase, found in Listeria innocua serovar 6a (strain ATCC BAA-680 / CLIP 11262).